A 420-amino-acid chain; its full sequence is Mannose-1-phosphate guanylyltransferase regulatory subunit alpha (420 aa).

Residues 2 to 251 form a substrate-binding domain region; the sequence is LKAVILIGGP…DGIWSQIKSA (250 aa). Residues glutamate 85 and glutamine 247 each coordinate GDP-alpha-D-mannose. Residues 273-420 form a hexapeptide repeat domain region; the sequence is LAKHTPGGPR…SRSFTNQIIL (148 aa). Residues 356-384 are C-loop; it reads TPNDPNPNDPRARMDSESLFKDGKLLPAI.

The protein belongs to the transferase hexapeptide repeat family. In terms of assembly, component of the GMPPA-GMPPB mannose-1-phosphate guanylyltransferase complex composed of 4 GMPPA subunits and 8 GMPPB subunits; the complex is organized into three layers, a central layer made up of 2 GMPPA dimers sandwiched between two layers each made up of 2 GMPPB dimers.

The protein localises to the cytoplasm. In terms of biological role, regulatory subunit of the GMPPA-GMPPB mannose-1-phosphate guanylyltransferase complex; reduces the catalytic activity of GMPPB when part of the complex. Mediates allosteric feedback inhibition of GMPPB catalytic activity upon binding GDP-alpha-D-mannose. Together with GMPPB regulates GDP-alpha-D-mannose levels. The protein is Mannose-1-phosphate guanylyltransferase regulatory subunit alpha (GMPPA) of Papio anubis (Olive baboon).